We begin with the raw amino-acid sequence, 1012 residues long: Structural polyprotein (1012 aa).

D30 lines the a divalent metal cation pocket. The Peptidase S50 domain maps to 514-755 (ADKGYEVVAN…AGRQFHLALA (242 aa)). Residue S653 is the Nucleophile of the active site. K692 is a catalytic residue. The segment at 972-1012 (MKHRNPRRAPPKPKPKPNAPSQRPPGRLGRWIRTVSDEDLE) is disordered. Residues 975–986 (RNPRRAPPKPKP) show a composition bias toward basic residues. The interaction with VP1 protein stretch occupies residues 1003–1012 (IRTVSDEDLE).

In terms of assembly, homotrimer. A central divalent metal stabilizes the VP2 trimer. Interacts with host ITGA4/ITGB1. As to quaternary structure, homodimer. Interacts (via C-terminus) with VP1 in the cytoplasm. Interacts with VP2. In terms of processing, specific enzymatic cleavages yield mature proteins. The capsid assembly seems to be regulated by polyprotein processing. The protease VP4 cleaves itself off the polyprotein, thus releasing pre-VP2 and VP3 within the infected cell. During capsid assembly, the C-terminus of pre-VP2 is further processed by VP4, giving rise to VP2, the external capsid protein and three small peptides that all stay closely associated with the capsid.

The protein localises to the virion. Its subcellular location is the host cytoplasm. Functionally, capsid protein VP2 self assembles to form an icosahedral capsid with a T=13 symmetry, about 70 nm in diameter, and consisting of 260 VP2 trimers. The capsid encapsulates the genomic dsRNA. VP2 is also involved in attachment and entry into the host cell by interacting with host ITGA4/ITGB1. Its function is as follows. The precursor of VP2 plays an important role in capsid assembly. First, pre-VP2 and VP2 oligomers assemble to form a procapsid. Then, the pre-VP2 intermediates may be processed into VP2 proteins by proteolytic cleavage mediated by VP4 to obtain the mature virion. The final capsid is composed of pentamers and hexamers but VP2 has a natural tendency to assemble into all-pentameric structures. Therefore pre-VP2 may be required to allow formation of the hexameric structures. Protease VP4 is a serine protease that cleaves the polyprotein into its final products. Pre-VP2 is first partially cleaved, and may be completely processed by VP4 upon capsid maturation. In terms of biological role, capsid protein VP3 plays a key role in virion assembly by providing a scaffold for the capsid made of VP2. May self-assemble to form a T=4-like icosahedral inner-capsid composed of at least 180 trimers. Plays a role in genomic RNA packaging by recruiting VP1 into the capsid and interacting with the dsRNA genome segments to form a ribonucleoprotein complex. Additionally, the interaction of the VP3 C-terminal tail with VP1 removes the inherent structural blockade of the polymerase active site. Thus, VP3 can also function as a transcriptional activator. Functionally, structural peptide 1 is a small peptide derived from pre-VP2 C-terminus. It destabilizes and perforates cell membranes, suggesting a role during entry. Its function is as follows. Structural peptide 2 is a small peptide derived from pVP2 C-terminus. It is not essential for the virus viability, but viral growth is affected when missing. Structural peptide 3 is a small peptide derived from pVP2 C-terminus. It is not essential for the virus viability, but viral growth is affected when missing. In terms of biological role, structural peptide 4 is a small peptide derived from pVP2 C-terminus. It is essential for the virus viability. The protein is Structural polyprotein of Gallus gallus (Chicken).